The sequence spans 425 residues: Glutamate-1-semialdehyde 2,1-aminomutase (425 aa).

Lys-265 bears the N6-(pyridoxal phosphate)lysine mark.

The protein belongs to the class-III pyridoxal-phosphate-dependent aminotransferase family. HemL subfamily. Homodimer. Pyridoxal 5'-phosphate is required as a cofactor.

The protein localises to the cytoplasm. The enzyme catalyses (S)-4-amino-5-oxopentanoate = 5-aminolevulinate. Its pathway is porphyrin-containing compound metabolism; protoporphyrin-IX biosynthesis; 5-aminolevulinate from L-glutamyl-tRNA(Glu): step 2/2. This Laribacter hongkongensis (strain HLHK9) protein is Glutamate-1-semialdehyde 2,1-aminomutase.